The following is a 62-amino-acid chain: Photosystem II reaction center protein Z (62 aa).

Transmembrane regions (helical) follow at residues 8-28 and 41-61; these read ALLALIFVSFALVVGVPVVFA and FSGLSLWLLLVFVVGILNSFV.

It belongs to the PsbZ family. In terms of assembly, PSII is composed of 1 copy each of membrane proteins PsbA, PsbB, PsbC, PsbD, PsbE, PsbF, PsbH, PsbI, PsbJ, PsbK, PsbL, PsbM, PsbT, PsbY, PsbZ, Psb30/Ycf12, at least 3 peripheral proteins of the oxygen-evolving complex and a large number of cofactors. It forms dimeric complexes.

The protein localises to the plastid. The protein resides in the chloroplast thylakoid membrane. Controls the interaction of photosystem II (PSII) cores with the light-harvesting antenna, aiding in the dissipation of excitation energy within PSII. PSII is a light-driven water plastoquinone oxidoreductase, using light energy to abstract electrons from H(2)O, generating a proton gradient subsequently used for ATP formation. The chain is Photosystem II reaction center protein Z from Chlamydomonas reinhardtii (Chlamydomonas smithii).